We begin with the raw amino-acid sequence, 438 residues long: Trigger factor (438 aa).

The PPIase FKBP-type domain occupies 160–231; the sequence is SDQVTIEEQG…IMDVKTKQLQ (72 aa). The tract at residues 407–438 is disordered; the sequence is AQLSGPQAETVAADQGEQQAEGQEESAEKSEE. Low complexity predominate over residues 418–427; that stretch reads AADQGEQQAE.

It belongs to the FKBP-type PPIase family. Tig subfamily.

It is found in the cytoplasm. The enzyme catalyses [protein]-peptidylproline (omega=180) = [protein]-peptidylproline (omega=0). Involved in protein export. Acts as a chaperone by maintaining the newly synthesized protein in an open conformation. Functions as a peptidyl-prolyl cis-trans isomerase. The chain is Trigger factor from Deinococcus deserti (strain DSM 17065 / CIP 109153 / LMG 22923 / VCD115).